A 264-amino-acid chain; its full sequence is H-2 class II histocompatibility antigen, I-E beta chain (264 aa).

The first 31 residues, 1–31, serve as a signal peptide directing secretion; it reads MVWLPRVPCVAAVILLLTVLSPPVALVRNSR. The beta-1 stretch occupies residues 32–121; it reads PRFLEYSTSE…IFDNFLVPRR (90 aa). Residues 32-225 lie on the Extracellular side of the membrane; that stretch reads PRFLEYSTSE…KAQSTSAQNK (194 aa). 2 disulfides stabilise this stretch: Cys42–Cys106 and Cys144–Cys200. N-linked (GlcNAc...) asparagine glycosylation is present at Asn46. The interval 122 to 215 is beta-2; that stretch reads VEPTVTVYPT…SLTDPVTVEW (94 aa). Residues 124–214 form the Ig-like C1-type domain; sequence PTVTVYPTKT…PSLTDPVTVE (91 aa). Residues 216 to 225 are connecting peptide; sequence KAQSTSAQNK. A helical transmembrane segment spans residues 226–248; that stretch reads MLSGVGGFVLGLLFLGAGLFIYF. Residues 249–264 are Cytoplasmic-facing; it reads RNQKGQSGLQPTGLLS.

This sequence belongs to the MHC class II family. In terms of processing, ubiquitinated in immature dendritic cells leading to down-regulation of MHC class II.

The protein localises to the membrane. The polypeptide is H-2 class II histocompatibility antigen, I-E beta chain (H2-Eb1) (Mus musculus (Mouse)).